Reading from the N-terminus, the 269-residue chain is 3'(2'),5'-bisphosphate nucleotidase CysQ (269 aa).

5 residues coordinate Mg(2+): E69, D89, L91, D92, and D216. E69 contacts substrate. Residues 91-94 (LDGT) and D216 each bind substrate.

The protein belongs to the inositol monophosphatase superfamily. CysQ family. It depends on Mg(2+) as a cofactor.

It localises to the cell inner membrane. The catalysed reaction is adenosine 3',5'-bisphosphate + H2O = AMP + phosphate. Functionally, converts adenosine-3',5'-bisphosphate (PAP) to AMP. This is 3'(2'),5'-bisphosphate nucleotidase CysQ from Aggregatibacter actinomycetemcomitans (Actinobacillus actinomycetemcomitans).